Consider the following 67-residue polypeptide: MKIQLFFFILLFWVTILPAKMKYPEYGSLDLRRECRMGNGRCKNQCHENEIRIAYCIRPGTHCCLQQ.

The signal sequence occupies residues 1 to 19 (MKIQLFFFILLFWVTILPA). Disulfide bonds link Cys-35–Cys-63, Cys-42–Cys-56, and Cys-46–Cys-64.

The protein belongs to the beta-defensin family.

The protein localises to the secreted. Functionally, has antibacterial activity. In Pan troglodytes (Chimpanzee), this protein is Beta-defensin 110 (DEFB110).